Reading from the N-terminus, the 1251-residue chain is Botulinum neurotoxin type E (1251 aa).

H212 contacts Zn(2+). E213 serves as the catalytic Proton acceptor. Positions 216 and 251 each coordinate Zn(2+). An intrachain disulfide couples C412 to C426. The tract at residues K423–L819 is translocation domain (TD). Residues N466 to N515 form a belt region. The N-terminus of receptor binding domain (N-RBD) stretch occupies residues K845–P1067. Residues S850–K1251 form a receptor-binding domain (TD) region. Residues N1068 to K1251 are C-terminus of receptor binding domain (C-RBD). Residues S1221–Y1224 carry the Host ganglioside-binding motif motif.

The protein belongs to the peptidase M27 family. As to quaternary structure, heterodimer; disulfide-linked heterodimer of a light chain (LC) and a heavy chain (HC); cleavage occurs after bacterial export by host proteases. The LC has the proteolytic/pharmacological activity, while the N- and C-terminal of the HC mediate channel formation and toxin binding, respectively. Oligomerizes in the presence of coreceptor ganglioside GT1b between pH 4.4 and 8.0; it might oligomerize on host cell surface. Interacts with host synaptic vesicle glycoproteins SV2A and SV2B. HC interacts with a complex including at least host SV2 and synaptotagmin-1 (SYT1); copurification depends on glycosylation of SV2. Zn(2+) is required as a cofactor.

The protein localises to the secreted. Its subcellular location is the host cytoplasm. The protein resides in the host cytosol. It is found in the host synapse. It localises to the host presynaptic cell membrane. The protein localises to the host cytoplasmic vesicle. Its subcellular location is the host secretory vesicle. The protein resides in the host synaptic vesicle membrane. The catalysed reaction is Limited hydrolysis of proteins of the neuroexocytosis apparatus, synaptobrevins, SNAP25 or syntaxin. No detected action on small molecule substrates.. Proteolysis of SNAP25 by whole toxin inhibited by dipicolinic acid, 1,10-phenanthroline and EDTA. Functionally, botulinum toxin causes flaccid paralysis by inhibiting neurotransmitter (acetylcholine) release from the presynaptic membranes of nerve terminals of eukaryotic host skeletal and autonomic nervous system, with frequent heart or respiratory failure. Precursor of botulinum neurotoxin E which has 2 coreceptors; complex polysialylated gangliosides found on neural tissue and specific membrane-anchored proteins found in synaptic vesicles. Receptor proteins are exposed on host presynaptic cell membrane during neurotransmitter release, when the toxin heavy chain (HC) binds to them. Upon synaptic vesicle recycling the toxin is taken up via the endocytic pathway. When the pH of the toxin-containing endosome drops a structural rearrangement occurs so that the N-terminus of the HC forms pores that allows the light chain (LC) to translocate into the cytosol. Once in the cytosol the disulfide bond linking the 2 subunits is reduced and LC cleaves its target protein on synaptic vesicles, preventing their fusion with the cytoplasmic membrane and thus neurotransmitter release. Electrical stimulation increases uptake of toxin, probably by transiently exposing a receptor found in eukaryotic target synaptic vesicles. Uses the large lumenal domain of synaptic vesicle glycoproteins 2A and 2B (SV2A and SV2B) but not SV2C as receptor; an N-linked glycan of SV2 is essential for receptor function. Host cell gangliosides are also required for neurotoxin uptake and full toxicity. BoNT/E is a 'coincidence detector'; it requires simultaneous binding to coreceptor GT1b and low pH to transform into a membrane-bound, oligomeric channel. Requires trypsinization and reduction before it can be used in assays in vitro. Its function is as follows. Has proteolytic activity. After translocation into the eukaryotic host cytosol, inhibits neurotransmitter release by acting as a zinc endopeptidase that catalyzes the hydrolysis of the '180-Arg-|-Ile-181' bond in SNAP25. Hydrolyzes the '185-Arg-|-Ile-186' bond of mouse SNAP23, but not in human which has a different sequence. Recognizes the '146-Met--Asp-186' region of SNAP25. The reaction mechanism probably has a nucleophilic water held in place by Glu-213. Reduction of the interchain disulfide bond occurs in the host cytosol and probably prevents retrotranslocation into the synaptic vesicle. In terms of biological role, responsible for host epithelial cell transcytosis, host nerve cell targeting and translocation of light chain (LC) into host cytosol. Composed of 3 subdomains; the translocation domain (TD), and N-terminus and C-terminus of the receptor-binding domain (RBD). The RBD is responsible for the adherence of the toxin to the cell surface. It probably simultaneously recognizes 2 coreceptors; polysialated gangliosides and either of the receptor proteins SV2A and SV2B in close proximity on host synaptic vesicles. The N-terminus of the TD wraps an extended belt around the perimeter of the light chain (LC), protecting Zn(2+) in the active site. The belt may also prevent premature LC dissociation from the translocation channel and protect toxin prior to translocation. The TD inserts into synaptic vesicle membrane to allow translocation into the host cytosol. Responsible for adherence of the toxin to the cell surface; HC alone prevents uptake of whole toxin by neural cells, and delays paralysis onset by 154%. Significantly decreases uptake and toxicity of whole BoNT/E, but also interferes with uptake of BoNT/C; binds GT1b in vitro. Binds to synaptic vesicle glycoproteins SV2A and SV2B which serve as coreceptors with gangliosides. Interaction with SV2 proteins requires SV2 glycosylation. HC alone significantly decreases uptake and toxicity of whole BoNT/E. HC is responsible for translocation of LC into the host cytosol; an intact disulfide bond between the 2 subunits is required for translocation, which is reduced upon contact with the host cytosol. The protein is Botulinum neurotoxin type E of Clostridium botulinum.